The primary structure comprises 1087 residues: Error-prone DNA polymerase 2 (1087 aa).

Residues 1033 to 1064 (DGAFRPPTGRGDEFAHGSPGSADSRGKAPPGV) are disordered.

The protein belongs to the DNA polymerase type-C family. DnaE2 subfamily.

It localises to the cytoplasm. It carries out the reaction DNA(n) + a 2'-deoxyribonucleoside 5'-triphosphate = DNA(n+1) + diphosphate. Its function is as follows. DNA polymerase involved in damage-induced mutagenesis and translesion synthesis (TLS). It is not the major replicative DNA polymerase. The polypeptide is Error-prone DNA polymerase 2 (Rhizobium meliloti (strain 1021) (Ensifer meliloti)).